Consider the following 708-residue polypeptide: Probable inactive lysine-specific demethylase JMJ19 (708 aa).

Positions 35–59 (VPRDKESPRSVSRQEQTTGFGTDDK) are disordered. Over residues 43 to 54 (RSVSRQEQTTGF) the composition is skewed to polar residues. Residues 108 to 149 (APVFNPTEEEFRDTLSYISSLRDRAEPYGICCVVPPPSWKPP) form the JmjN domain. Residues 293–454 (SSGWNLNSTA…HGDIAVQVNQ (162 aa)) enclose the JmjC domain. Zn(2+)-binding residues include Cys544, Cys547, Cys558, Cys560, Cys567, His570, Cys575, and Cys577. The RING-type; degenerate zinc finger occupies 544 to 581 (CCVCLGDLYLSAVNCSCSANRYSCLNHMRKLCACPCDR). The Nuclear localization signal signature appears at 646–653 (TRKDVAAG). Basic and acidic residues predominate over residues 678–694 (AKETLESCSKKSNRPCD). The segment at 678 to 708 (AKETLESCSKKSNRPCDNDSSEANAPKKQKQ) is disordered.

Belongs to the JARID1 histone demethylase family. As to expression, expressed in inflorescences, roots, siliques, leaves and stems.

Its subcellular location is the nucleus. This is Probable inactive lysine-specific demethylase JMJ19 from Arabidopsis thaliana (Mouse-ear cress).